Here is a 714-residue protein sequence, read N- to C-terminus: Probable serine/threonine-protein kinase At1g09600 (714 aa).

The interval 1–64 (MGCNCTKGTR…NVGFEERSND (64 aa)) is disordered. Gly2 carries N-myristoyl glycine lipidation. Residues 16-27 (VDNSNSIVSNVN) are compositionally biased toward low complexity. Positions 31–46 (RRSKPKKTPKKKKKSK) are enriched in basic residues. In terms of domain architecture, Protein kinase spans 163-447 (FEKLEKIGQG…TASALESEFF (285 aa)). Residues 169–177 (IGQGTYSSV) and Lys192 each bind ATP. Asp287 serves as the catalytic Proton acceptor. A compositionally biased stretch (basic and acidic residues) spans 471-498 (KAQEEEAKRKKDTSSKQNDSKQVSRESK). Disordered stretches follow at residues 471-579 (KAQE…RKEL) and 693-714 (VDKKTNRGDNRQTQAFLAANGR). Composition is skewed to polar residues over residues 506-528 (NAESLTSIQKRQGQHNQVSNSDK) and 556-573 (GVSSVNRNGENVMMGSSR).

It belongs to the protein kinase superfamily. Ser/Thr protein kinase family.

The sequence is that of Probable serine/threonine-protein kinase At1g09600 from Arabidopsis thaliana (Mouse-ear cress).